Here is a 902-residue protein sequence, read N- to C-terminus: Ribonuclease E (902 aa).

Residues 39-119 (SNIYKGKITR…GTKGAALTTF (81 aa)) enclose the S1 motif domain. Residues Asp-303 and Asp-346 each coordinate Mg(2+). Zn(2+)-binding residues include Cys-404 and Cys-407. The tract at residues 404 to 407 (CPRC) is required for zinc-mediated homotetramerization and catalytic activity. The interval 881–902 (GKNSAGVHSATNFSNSPVSKLK) is disordered. Polar residues predominate over residues 889 to 902 (SATNFSNSPVSKLK).

This sequence belongs to the RNase E/G family. RNase E subfamily. As to quaternary structure, component of the RNA degradosome, which is a multiprotein complex involved in RNA processing and mRNA degradation. Within the RNA degradosome, RNase E assembles into a homotetramer formed by a dimer of dimers. Zn(2+) serves as cofactor. Mg(2+) is required as a cofactor.

Its subcellular location is the cytoplasm. It is found in the cell inner membrane. It catalyses the reaction Endonucleolytic cleavage of single-stranded RNA in A- and U-rich regions.. In terms of biological role, endoribonuclease that plays a central role in RNA processing and decay. Required for the maturation of 5S and 16S rRNAs and the majority of tRNAs. Also involved in the degradation of most mRNAs. This chain is Ribonuclease E, found in Buchnera aphidicola subsp. Acyrthosiphon pisum (strain APS) (Acyrthosiphon pisum symbiotic bacterium).